A 152-amino-acid chain; its full sequence is Large ribosomal subunit protein uL15 (152 aa).

Residues 1–56 are disordered; that stretch reads MTSTLNTLKSNLGSRKKKLRKGRGIAAGQGASCGFGMRGQKSRSGRPTRPGFEGGQ. Basic residues predominate over residues 14-23; the sequence is SRKKKLRKGR. The span at 25 to 37 shows a compositional bias: gly residues; it reads IAAGQGASCGFGM.

This sequence belongs to the universal ribosomal protein uL15 family. Part of the 50S ribosomal subunit.

Binds to the 23S rRNA. The chain is Large ribosomal subunit protein uL15 from Prochlorococcus marinus (strain MIT 9515).